We begin with the raw amino-acid sequence, 133 residues long: Lanmodulin (133 aa).

Positions 1–21 (MAFRLSSAVLLAALVAAPAYA) are cleaved as a signal peptide. D35, D37, D39, T41, E46, D59, D61, D63, T65, E70, D84, D86, D88, T90, E95, N108, D110, D112, T114, and E119 together coordinate Nd(3+). EF-hand domains follow at residues 35–46 (DPDKDGTIDLKE), 59–70 (DPDKDGTLDAKE), 84–95 (DPDNDGTLDKKE), and 108–119 (NPDNDGTIDARE).

In terms of assembly, monomer.

The protein localises to the periplasm. Its function is as follows. High-affinity lanthanide (Ln)-binding protein. Shows 100 million-fold selectivity for La(3+) over Ca(2+). Binds 3 equiv of Ln(3+) with picomolar affinity and a fourth with approximately micromolar affinity. May be involved in receiving and then transporting lanthanides (such as La(3+), Nd(3+) and Sm(3+)) to a specific periplasmic destination. The protein is Lanmodulin of Methylorubrum extorquens (strain ATCC 14718 / DSM 1338 / JCM 2805 / NCIMB 9133 / AM1) (Methylobacterium extorquens).